The following is a 300-amino-acid chain: Cation-efflux pump FieF (300 aa).

4 consecutive transmembrane segments (helical) span residues 12–32 (AALAATALASILLLIKIVAWY), 40–60 (LAALVDSLVDIAASLTNLLVV), 82–102 (AALAQSMFISGSALFLFLTGF), and 114–134 (PGVGIAVTVVALFSTLLLVTY). Residues Asp-45 and Asp-49 each coordinate Zn(2+). 2 residues coordinate Zn(2+): His-153 and Asp-157. A run of 2 helical transmembrane segments spans residues 155-175 (QSDVMMNGAILIALALSWYGF) and 178-198 (ADALFALAIGVYILYSALRMG).

This sequence belongs to the cation diffusion facilitator (CDF) transporter (TC 2.A.4) family. FieF subfamily. In terms of assembly, homodimer.

Its subcellular location is the cell inner membrane. The enzyme catalyses Zn(2+)(in) + H(+)(out) = Zn(2+)(out) + H(+)(in). It carries out the reaction Cd(2+)(in) + H(+)(out) = Cd(2+)(out) + H(+)(in). The catalysed reaction is Fe(2+)(in) + H(+)(out) = Fe(2+)(out) + H(+)(in). Divalent metal cation transporter which exports Zn(2+), Cd(2+) and possibly Fe(2+). May be involved in zinc and iron detoxification by efflux. This is Cation-efflux pump FieF from Serratia proteamaculans (strain 568).